The sequence spans 243 residues: Trypsin (243 aa).

An N-terminal signal peptide occupies residues 1–15 (MKFLLLCVLLGAAAA). The propeptide at 16-20 (FDDDK) is activation peptide. Positions 21–241 (IIGGATCAKS…YNAWIQNTIA (221 aa)) constitute a Peptidase S1 domain. 6 cysteine pairs are disulfide-bonded: C27–C157, C45–C61, C129–C230, C136–C203, C168–C182, and C193–C217. Residue H60 is the Charge relay system of the active site. 3 residues coordinate Ca(2+): E72, N74, and E82. D104 (charge relay system) is an active-site residue. Catalysis depends on S197, which acts as the Charge relay system.

This sequence belongs to the peptidase S1 family. Ca(2+) serves as cofactor.

The protein localises to the secreted. It localises to the extracellular space. The enzyme catalyses Preferential cleavage: Arg-|-Xaa, Lys-|-Xaa.. The polypeptide is Trypsin (Xenopus laevis (African clawed frog)).